We begin with the raw amino-acid sequence, 319 residues long: Probable alcohol dehydrogenase (319 aa).

7 residues coordinate Zn(2+): Cys-18, His-39, Cys-68, Cys-71, Cys-74, Cys-82, and Cys-149.

Belongs to the zinc-containing alcohol dehydrogenase family. Requires Zn(2+) as cofactor.

It catalyses the reaction a primary alcohol + NAD(+) = an aldehyde + NADH + H(+). It carries out the reaction a secondary alcohol + NAD(+) = a ketone + NADH + H(+). This is Probable alcohol dehydrogenase (terPD) from Pseudomonas sp.